The following is a 428-amino-acid chain: 3-phosphoshikimate 1-carboxyvinyltransferase (428 aa).

3-phosphoshikimate is bound by residues lysine 22, serine 23, and arginine 27. Lysine 22 is a phosphoenolpyruvate binding site. The phosphoenolpyruvate site is built by glycine 96 and arginine 124. 3-phosphoshikimate is bound by residues serine 169, serine 170, glutamine 171, serine 197, aspartate 313, asparagine 336, and lysine 340. Glutamine 171 is a phosphoenolpyruvate binding site. Aspartate 313 serves as the catalytic Proton acceptor. Phosphoenolpyruvate-binding residues include arginine 344, arginine 386, and lysine 411.

It belongs to the EPSP synthase family. In terms of assembly, monomer.

The protein resides in the cytoplasm. The catalysed reaction is 3-phosphoshikimate + phosphoenolpyruvate = 5-O-(1-carboxyvinyl)-3-phosphoshikimate + phosphate. The protein operates within metabolic intermediate biosynthesis; chorismate biosynthesis; chorismate from D-erythrose 4-phosphate and phosphoenolpyruvate: step 6/7. In terms of biological role, catalyzes the transfer of the enolpyruvyl moiety of phosphoenolpyruvate (PEP) to the 5-hydroxyl of shikimate-3-phosphate (S3P) to produce enolpyruvyl shikimate-3-phosphate and inorganic phosphate. This chain is 3-phosphoshikimate 1-carboxyvinyltransferase, found in Photorhabdus laumondii subsp. laumondii (strain DSM 15139 / CIP 105565 / TT01) (Photorhabdus luminescens subsp. laumondii).